Consider the following 175-residue polypeptide: Adenine phosphoribosyltransferase (175 aa).

The protein belongs to the purine/pyrimidine phosphoribosyltransferase family. In terms of assembly, homodimer.

Its subcellular location is the cytoplasm. The enzyme catalyses AMP + diphosphate = 5-phospho-alpha-D-ribose 1-diphosphate + adenine. It participates in purine metabolism; AMP biosynthesis via salvage pathway; AMP from adenine: step 1/1. Its function is as follows. Catalyzes a salvage reaction resulting in the formation of AMP, that is energically less costly than de novo synthesis. The chain is Adenine phosphoribosyltransferase from Caldicellulosiruptor bescii (strain ATCC BAA-1888 / DSM 6725 / KCTC 15123 / Z-1320) (Anaerocellum thermophilum).